A 151-amino-acid polypeptide reads, in one-letter code: IFN signaling evasion protein OPG029 (151 aa).

This sequence belongs to the orthopoxvirus OPG029 family. As to quaternary structure, interacts with host TANK, TBKBP1 and AZI2; these interactions prevent interferon production. Interacts with host STAT2.

Its function is as follows. Prevents establishment of cellular antiviral state by blocking virus-induced phosphorylation and activation of interferon regulatory factors 3/IRF3 and 7/IRF7, transcription factors critical for the induction of interferons alpha and beta. This blockage is produced through the inhibition of host TBK1, by binding host TBK1 adapter proteins TBKBP1 and AZI2, thereby producing a strong inhibition of the phosphorylation and activation of IRF3 and IRF7. Also acts as an inhibitor of the cellular response to type I IFN by interacting with host STAT2. Mechanistically, exerts its inhibitory effect after host ISGF3 complex (composed of STAT1, STAT2 and IRF9) binding to the interferon stimulated response element (ISRE). The polypeptide is IFN signaling evasion protein OPG029 (OPG029) (Vaccinia virus (strain Western Reserve) (VACV)).